A 296-amino-acid polypeptide reads, in one-letter code: Myeloid differentiation primary response protein MyD88 (296 aa).

The region spanning 54 to 109 is the Death domain; sequence MDFEYLEIRQLETQADPTGRLLDAWQGRPGASVGRLLELLTKLGRDDVLLELGPSI. Positions 110–155 are intermediate domain; that stretch reads EEDCQKYILKQQQEEAEKPLQVAAVDSSVPRTAELAGITTLDDPLG. Residues 159–293 enclose the TIR domain; it reads ERFDAFICYC…WFWTRLAKAL (135 aa). Ser-244 carries the post-translational modification Phosphoserine.

Homodimer. Also forms heterodimers with TIRAP. Binds to TLR2, TLR5, IRAK1, IRAK2 and IRAK4 via their respective TIR domains. Interacts with IL18R1. Interacts with BMX, IL1RL1, IKBKE and IRF7. Interacts with LRRFIP1 and LRRFIP2; this interaction positively regulates Toll-like receptor (TLR) signaling in response to agonist. Interacts with FLII. LRRFIP1 and LRRFIP2 compete with FLII for MYD88-binding. Interacts with IRF1. Upon IL1B treatment, forms a complex with PELI1, IRAK1, IRAK4 and TRAF6; this complex recruits MAP3K7/TAK1, TAB1 and TAB2 to mediate NF-kappa-B activation. Direct binding of SMAD6 to PELI1 prevents the complex formation and hence negatively regulates IL1R-TLR signaling and eventually NF-kappa-B-mediated gene expression. May interact with PIK3AP1. Interacts (via TIR domain) with DHX9 (via H2A and OB-fold regions); this interaction is direct. Interacts with OTUD4 deubiquitinase; the interaction is direct. Interacts with TLR4. In terms of assembly, (Microbial infection) In case of infection, interacts with uropathogenic E.coli protein TcpC; suppressing Toll-like receptor (TLR)-mediated cytokine production. As to quaternary structure, (Microbial infection) In case of infection, interacts with uropathogenic E.faecalis protein TcpF; suppressing Toll-like receptor (TLR)-mediated cytokine production. (Microbial infection) In case of infection, interacts with B.melitensis protein TcpB. In terms of assembly, (Microbial infection) Interacts with human metapneumovirus protein M2-2; this interaction prevents MYD88-mediated cytokine secretion. Ubiquitinated; undergoes 'Lys-63'-linked polyubiquitination. OTUD4 specifically hydrolyzes 'Lys-63'-linked polyubiquitinated MYD88. Deubiquitinated by USP3 that cleaves 'Lys-63'-linked ubiquitin chains leading to inhibition of MYD88-induced NF-kappa-B signaling. Post-translationally, (Microbial infection) Ubiquitinated by human herpesvirus 8 (KSHV) protein RTA/ORF50, leading to proteasomal degradation ans suppression of TLR4 signaling pathway. Ubiquitous.

It localises to the cytoplasm. It is found in the nucleus. Adapter protein involved in the Toll-like receptor and IL-1 receptor signaling pathway in the innate immune response. Acts via IRAK1, IRAK2, IRF7 and TRAF6, leading to NF-kappa-B activation, cytokine secretion and the inflammatory response. Increases IL-8 transcription. Involved in IL-18-mediated signaling pathway. Activates IRF1 resulting in its rapid migration into the nucleus to mediate an efficient induction of IFN-beta, NOS2/INOS, and IL12A genes. Upon TLR8 activation by GU-rich single-stranded RNA (GU-rich RNA) derived from viruses such as SARS-CoV-2, SARS-CoV and HIV-1, induces IL1B release through NLRP3 inflammasome activation. MyD88-mediated signaling in intestinal epithelial cells is crucial for maintenance of gut homeostasis and controls the expression of the antimicrobial lectin REG3G in the small intestine. This chain is Myeloid differentiation primary response protein MyD88, found in Homo sapiens (Human).